We begin with the raw amino-acid sequence, 493 residues long: UDP-glucose 6-dehydrogenase (493 aa).

NAD(+)-binding positions include 11 to 16 (GAGYVG), aspartate 36, arginine 41, and 89 to 93 (VNTPT). The disordered stretch occupies residues 88–110 (SVNTPTKTYGMGKGRAADLKYIE). An N6-acetyllysine modification is found at lysine 107. The segment at 129 to 135 (KSTVPVR) is allosteric switch region. 130–132 (STV) lines the NAD(+) pocket. Glutamate 161 (proton donor/acceptor) is an active-site residue. Substrate contacts are provided by residues 161 to 165 (EFLAE), 220 to 224 (KLAAN), arginine 260, and 267 to 273 (KASVGFG). Glutamate 165 lines the NAD(+) pocket. Residue lysine 220 is the Proton donor/acceptor of the active site. Cysteine 276 acts as the Nucleophile in catalysis. Residue 276–279 (CFQK) participates in NAD(+) binding. Residues 321-325 (SLFNT) form an important for formation of active hexamer structure region. Substrate is bound at residue 338–339 (FK). An NAD(+)-binding site is contributed by arginine 346. Arginine 442 provides a ligand contact to substrate. The disordered stretch occupies residues 466 to 493 (VSSKRIPYTPGEIPKFSLQDPPNKKPKV). A Phosphothreonine modification is found at threonine 474.

This sequence belongs to the UDP-glucose/GDP-mannose dehydrogenase family. As to quaternary structure, homohexamer.

It carries out the reaction UDP-alpha-D-glucose + 2 NAD(+) + H2O = UDP-alpha-D-glucuronate + 2 NADH + 3 H(+). The protein operates within nucleotide-sugar biosynthesis; UDP-alpha-D-glucuronate biosynthesis; UDP-alpha-D-glucuronate from UDP-alpha-D-glucose: step 1/1. UDP-alpha-D-xylose (UDX) acts as a feedback inhibitor. It binds at the same site as the substrate, but functions as allosteric inhibitor by triggering a conformation change that disrupts the active hexameric ring structure and gives rise to an inactive, horseshoe-shaped hexamer. In terms of biological role, catalyzes the formation of UDP-alpha-D-glucuronate, a constituent of complex glycosaminoglycans. Required for the biosynthesis of chondroitin sulfate and heparan sulfate. Required for embryonic development via its role in the biosynthesis of glycosaminoglycans. Required for proper brain and neuronal development. The sequence is that of UDP-glucose 6-dehydrogenase (Ugdh) from Rattus norvegicus (Rat).